The primary structure comprises 367 residues: Glutamate 5-kinase (367 aa).

An ATP-binding site is contributed by Lys-10. Residues Ser-50, Asp-137, and Asn-149 each coordinate substrate. Residues 169-170 (TD) and 211-217 (TGGMSTK) contribute to the ATP site. The region spanning 275–353 (AGEITVDEGA…QEIDAILGYE (79 aa)) is the PUA domain.

The protein belongs to the glutamate 5-kinase family.

The protein resides in the cytoplasm. The enzyme catalyses L-glutamate + ATP = L-glutamyl 5-phosphate + ADP. The protein operates within amino-acid biosynthesis; L-proline biosynthesis; L-glutamate 5-semialdehyde from L-glutamate: step 1/2. In terms of biological role, catalyzes the transfer of a phosphate group to glutamate to form L-glutamate 5-phosphate. The polypeptide is Glutamate 5-kinase (Escherichia fergusonii (strain ATCC 35469 / DSM 13698 / CCUG 18766 / IAM 14443 / JCM 21226 / LMG 7866 / NBRC 102419 / NCTC 12128 / CDC 0568-73)).